Here is a 93-residue protein sequence, read N- to C-terminus: Small ribosomal subunit protein uS17 (93 aa).

It belongs to the universal ribosomal protein uS17 family. In terms of assembly, part of the 30S ribosomal subunit.

Its function is as follows. One of the primary rRNA binding proteins, it binds specifically to the 5'-end of 16S ribosomal RNA. The protein is Small ribosomal subunit protein uS17 of Rhodococcus jostii (strain RHA1).